Consider the following 374-residue polypeptide: Carnitine monooxygenase oxygenase subunit (374 aa).

A Rieske domain is found at 47 to 155 (WICVAHSSEL…LEEYAGFVFI (109 aa)). [2Fe-2S] cluster is bound by residues Cys89, His91, Cys109, and His112. Residues His211, His216, and Asp325 each coordinate Fe cation.

Belongs to the bacterial ring-hydroxylating dioxygenase alpha subunit family. CntA subfamily. Composed of an oxygenase subunit and a reductase subunit. It depends on [2Fe-2S] cluster as a cofactor. Fe cation serves as cofactor.

The catalysed reaction is (R)-carnitine + NADH + O2 + H(+) = (3R)-3-hydroxy-4-oxobutanoate + trimethylamine + NAD(+) + H2O. It catalyses the reaction (R)-carnitine + NADPH + O2 + H(+) = (3R)-3-hydroxy-4-oxobutanoate + trimethylamine + NADP(+) + H2O. It functions in the pathway amine and polyamine metabolism; carnitine metabolism. In terms of biological role, converts carnitine to trimethylamine and malic semialdehyde. This Escherichia coli O157:H7 protein is Carnitine monooxygenase oxygenase subunit (yeaW).